A 240-amino-acid polypeptide reads, in one-letter code: UDP-2,3-diacylglucosamine hydrolase (240 aa).

Aspartate 8, histidine 10, aspartate 41, asparagine 79, and histidine 114 together coordinate Mn(2+). Residue 79-80 (NR) participates in substrate binding. Substrate contacts are provided by aspartate 122, serine 160, asparagine 164, lysine 167, and histidine 195. Histidine 195 and histidine 197 together coordinate Mn(2+).

This sequence belongs to the LpxH family. Requires Mn(2+) as cofactor.

It localises to the cell inner membrane. It is found in the cytoplasm. It catalyses the reaction UDP-2-N,3-O-bis[(3R)-3-hydroxytetradecanoyl]-alpha-D-glucosamine + H2O = 2-N,3-O-bis[(3R)-3-hydroxytetradecanoyl]-alpha-D-glucosaminyl 1-phosphate + UMP + 2 H(+). It participates in glycolipid biosynthesis; lipid IV(A) biosynthesis; lipid IV(A) from (3R)-3-hydroxytetradecanoyl-[acyl-carrier-protein] and UDP-N-acetyl-alpha-D-glucosamine: step 4/6. Inhibited by a sulfonyl piperazine compound that shows antibacterial activity against E.coli; LpxH is the cellular target of this compound. Inhibited by 0.01% (or more) Triton X-100 in vitro. Hydrolyzes the pyrophosphate bond of UDP-2,3-diacylglucosamine to yield 2,3-diacylglucosamine 1-phosphate (lipid X) and UMP by catalyzing the attack of water at the alpha-P atom. Involved in the biosynthesis of lipid A, a phosphorylated glycolipid that anchors the lipopolysaccharide to the outer membrane of the cell. Is essential for E.coli growth. Does not cleave the unacylated UDP-GlcNAc, the mono-acylated UDP-3-O-(R)-3-hydroxymyristoyl-GlcNAc, and CDP-diacylglycerol. In Escherichia coli (strain K12), this protein is UDP-2,3-diacylglucosamine hydrolase.